Consider the following 476-residue polypeptide: 3-isopropylmalate dehydratase large subunit (476 aa).

Positions 353, 413, and 416 each coordinate [4Fe-4S] cluster.

It belongs to the aconitase/IPM isomerase family. LeuC type 1 subfamily. Heterodimer of LeuC and LeuD. [4Fe-4S] cluster serves as cofactor.

It catalyses the reaction (2R,3S)-3-isopropylmalate = (2S)-2-isopropylmalate. It participates in amino-acid biosynthesis; L-leucine biosynthesis; L-leucine from 3-methyl-2-oxobutanoate: step 2/4. Functionally, catalyzes the isomerization between 2-isopropylmalate and 3-isopropylmalate, via the formation of 2-isopropylmaleate. In Yersinia pseudotuberculosis serotype O:1b (strain IP 31758), this protein is 3-isopropylmalate dehydratase large subunit.